The following is an 81-amino-acid chain: uncharacterized protein (81 aa).

This is an uncharacterized protein from Bacillus subtilis (strain 168).